The chain runs to 262 residues: Adenosylcobinamide-GDP ribazoletransferase (262 aa).

A run of 6 helical transmembrane segments spans residues Y43–Q63, L66–F86, G120–L140, A146–F166, L191–L211, and A242–L262.

The protein belongs to the CobS family. Mg(2+) is required as a cofactor.

It localises to the cell inner membrane. The catalysed reaction is alpha-ribazole + adenosylcob(III)inamide-GDP = adenosylcob(III)alamin + GMP + H(+). It catalyses the reaction alpha-ribazole 5'-phosphate + adenosylcob(III)inamide-GDP = adenosylcob(III)alamin 5'-phosphate + GMP + H(+). Its pathway is cofactor biosynthesis; adenosylcobalamin biosynthesis; adenosylcobalamin from cob(II)yrinate a,c-diamide: step 7/7. Functionally, joins adenosylcobinamide-GDP and alpha-ribazole to generate adenosylcobalamin (Ado-cobalamin). Also synthesizes adenosylcobalamin 5'-phosphate from adenosylcobinamide-GDP and alpha-ribazole 5'-phosphate. This chain is Adenosylcobinamide-GDP ribazoletransferase, found in Shewanella sp. (strain ANA-3).